The primary structure comprises 291 residues: 29 kDa ribonucleoprotein B, chloroplastic (291 aa).

The region spanning Leu87 to Ala165 is the RRM 1 domain. The disordered stretch occupies residues Pro164 to Ser202. Positions Pro166–Ser206 are linker (Gly-rich). Positions Phe174–Asp189 are enriched in gly residues. Residues Asn207 to Glu285 form the RRM 2 domain.

Its subcellular location is the plastid. It is found in the chloroplast. Could be involved in splicing and/or processing of chloroplast RNA's. This is 29 kDa ribonucleoprotein B, chloroplastic from Nicotiana sylvestris (Wood tobacco).